We begin with the raw amino-acid sequence, 643 residues long: Melanoma-associated antigen C3 (643 aa).

2 MAGE domains span residues 184-384 (LDEK…AAGM) and 456-643 (LDEK…FCPE). Residues 347 to 421 (NPQGLAGHRQ…PQSPLDSCSS (75 aa)) form a disordered region. Positions 354-363 (HRQEDGRRGL) are enriched in basic and acidic residues. Pro residues predominate over residues 383-414 (GMPPLPQSPPEIPPQGPPKISPQGPPQSPPQS). Threonine 478, threonine 484, and threonine 485 each carry phosphothreonine.

As to expression, expressed in testis. Not expressed in other normal tissues, but is expressed in tumors of different histological origins.

The sequence is that of Melanoma-associated antigen C3 (MAGEC3) from Homo sapiens (Human).